Here is a 261-residue protein sequence, read N- to C-terminus: Zinc import ATP-binding protein ZnuC (261 aa).

One can recognise an ABC transporter domain in the interval 6–227; that stretch reads IQLNNIHLRF…PEYLKLFGKQ (222 aa). 38 to 45 serves as a coordination point for ATP; sequence GPNGAGKS.

It belongs to the ABC transporter superfamily. Zinc importer (TC 3.A.1.15.5) family. As to quaternary structure, the complex is composed of two ATP-binding proteins (ZnuC), two transmembrane proteins (ZnuB) and a solute-binding protein (ZnuA).

It localises to the cell inner membrane. The enzyme catalyses Zn(2+)(out) + ATP(in) + H2O(in) = Zn(2+)(in) + ADP(in) + phosphate(in) + H(+)(in). In terms of biological role, part of the ABC transporter complex ZnuABC involved in zinc import. Responsible for energy coupling to the transport system. The polypeptide is Zinc import ATP-binding protein ZnuC (Saccharophagus degradans (strain 2-40 / ATCC 43961 / DSM 17024)).